Here is a 548-residue protein sequence, read N- to C-terminus: Folylpolyglutamate synthase (548 aa).

130 to 133 contributes to the ATP binding site; the sequence is GKGS. Mg(2+) contacts are provided by Ser-157, Glu-234, and His-262. ATP contacts are provided by Arg-382 and Asp-396.

Belongs to the folylpolyglutamate synthase family. A monovalent cation serves as cofactor.

The protein localises to the mitochondrion inner membrane. Its subcellular location is the mitochondrion matrix. It is found in the cytoplasm. It carries out the reaction (6S)-5,6,7,8-tetrahydrofolyl-(gamma-L-Glu)(n) + L-glutamate + ATP = (6S)-5,6,7,8-tetrahydrofolyl-(gamma-L-Glu)(n+1) + ADP + phosphate + H(+). It participates in cofactor biosynthesis; tetrahydrofolylpolyglutamate biosynthesis. In terms of biological role, catalyzes conversion of folates to polyglutamate derivatives allowing concentration of folate compounds in the cell and the intracellular retention of these cofactors, which are important substrates for most of the folate-dependent enzymes that are involved in one-carbon transfer reactions involved in purine, pyrimidine and amino acid synthesis. Required for methionine synthesis and maintenance of intact mitochondrial DNA. Involved in telomere maintenance. The protein is Folylpolyglutamate synthase of Saccharomyces cerevisiae (strain FostersB) (Baker's yeast).